Reading from the N-terminus, the 458-residue chain is tRNA-2-methylthio-N(6)-dimethylallyladenosine synthase (458 aa).

In terms of domain architecture, MTTase N-terminal spans 15–134 (KKVFIKTYGC…LPELLQQAQQ (120 aa)). Residues C24, C60, C97, C175, C179, and C182 each contribute to the [4Fe-4S] cluster site. The Radical SAM core domain occupies 161 to 393 (QKRGVSAFLT…QALLLDQQHR (233 aa)). Residues 396 to 457 (RSKIGQTTDV…SNSFVGEKAN (62 aa)) form the TRAM domain.

Belongs to the methylthiotransferase family. MiaB subfamily. Monomer. [4Fe-4S] cluster is required as a cofactor.

It is found in the cytoplasm. The enzyme catalyses N(6)-dimethylallyladenosine(37) in tRNA + (sulfur carrier)-SH + AH2 + 2 S-adenosyl-L-methionine = 2-methylsulfanyl-N(6)-dimethylallyladenosine(37) in tRNA + (sulfur carrier)-H + 5'-deoxyadenosine + L-methionine + A + S-adenosyl-L-homocysteine + 2 H(+). Its function is as follows. Catalyzes the methylthiolation of N6-(dimethylallyl)adenosine (i(6)A), leading to the formation of 2-methylthio-N6-(dimethylallyl)adenosine (ms(2)i(6)A) at position 37 in tRNAs that read codons beginning with uridine. This is tRNA-2-methylthio-N(6)-dimethylallyladenosine synthase from Bartonella bacilliformis (strain ATCC 35685 / KC583 / Herrer 020/F12,63).